Consider the following 336-residue polypeptide: 4-hydroxy-2-oxovalerate aldolase (336 aa).

The 251-residue stretch at 4–254 (PRLTDTTLRD…NPGLDVLALM (251 aa)) folds into the Pyruvate carboxyltransferase domain. 12–13 (RD) is a substrate binding site. Mn(2+) is bound at residue D13. H16 acts as the Proton acceptor in catalysis. Positions 166 and 193 each coordinate substrate. 2 residues coordinate Mn(2+): H193 and H195. Y284 lines the substrate pocket.

It belongs to the 4-hydroxy-2-oxovalerate aldolase family.

The enzyme catalyses (S)-4-hydroxy-2-oxopentanoate = acetaldehyde + pyruvate. The chain is 4-hydroxy-2-oxovalerate aldolase from Roseiflexus castenholzii (strain DSM 13941 / HLO8).